The primary structure comprises 1277 residues: Protein FAM83H (1277 aa).

Residues methionine 1 to glutamate 12 show a composition bias toward polar residues. Disordered regions lie at residues methionine 1–leucine 20, serine 67–tyrosine 98, phenylalanine 717–leucine 756, serine 772–threonine 805, glutamate 971–phenylalanine 1018, lysine 1070–serine 1130, glutamine 1158–leucine 1225, and lysine 1247–isoleucine 1266. Positions serine 724 to arginine 750 are enriched in basic and acidic residues. Polar residues-rich tracts occupy residues histidine 777–threonine 805, glutamate 971–asparagine 982, serine 993–asparagine 1015, and lysine 1112–serine 1130. Positions serine 1204–serine 1215 are enriched in low complexity. Over residues lysine 1247–alanine 1263 the composition is skewed to basic and acidic residues.

This sequence belongs to the FAM83 family.

The protein resides in the cytoplasm. It localises to the cytoskeleton. In terms of biological role, may play a role in keratin cytoskeleton disassembly. The protein is Protein FAM83H of Xenopus tropicalis (Western clawed frog).